Here is a 45-residue protein sequence, read N- to C-terminus: MELAMLLAKLPEAYSVFNPLVDVLPVIPVFFLLLAFVWQAAVGFR.

The propeptide occupies 1–8; sequence MELAMLLA. A helical transmembrane segment spans residues 24-44; it reads LPVIPVFFLLLAFVWQAAVGF.

This sequence belongs to the PsbK family. In terms of assembly, PSII is composed of 1 copy each of membrane proteins PsbA, PsbB, PsbC, PsbD, PsbE, PsbF, PsbH, PsbI, PsbJ, PsbK, PsbL, PsbM, PsbT, PsbX, PsbY, PsbZ, Psb30/Ycf12, peripheral proteins PsbO, CyanoQ (PsbQ), PsbU, PsbV and a large number of cofactors. It forms dimeric complexes.

It localises to the cellular thylakoid membrane. One of the components of the core complex of photosystem II (PSII). PSII is a light-driven water:plastoquinone oxidoreductase that uses light energy to abstract electrons from H(2)O, generating O(2) and a proton gradient subsequently used for ATP formation. It consists of a core antenna complex that captures photons, and an electron transfer chain that converts photonic excitation into a charge separation. The sequence is that of Photosystem II reaction center protein K from Trichodesmium erythraeum (strain IMS101).